Here is a 186-residue protein sequence, read N- to C-terminus: Acetyltransferase PA5475 (186 aa).

Positions Val31–Leu186 constitute an N-acetyltransferase domain. CoA contacts are provided by residues Val117–Ile119, Gly125, Asn156, and Asp161–Cys163.

In terms of biological role, catalyzes the transfer of an acetyl group from acetyl coenzyme A (AcCoA) to an acceptor substrate and releases both CoA and the acetylated product. It prefers the antibiotic chloramphenicol. In Pseudomonas aeruginosa (strain ATCC 15692 / DSM 22644 / CIP 104116 / JCM 14847 / LMG 12228 / 1C / PRS 101 / PAO1), this protein is Acetyltransferase PA5475.